Consider the following 195-residue polypeptide: UDP-N-acetylbacillosamine N-acetyltransferase (195 aa).

Substrate is bound by residues 13-15 (SGH), 35-36 (DD), and glycine 56. Histidine 125 acts as the Proton acceptor in catalysis. Residues histidine 134, isoleucine 155, and glycine 173 each coordinate acetyl-CoA.

Belongs to the transferase hexapeptide repeat family. In terms of assembly, homotrimer.

The catalysed reaction is UDP-N-acetylbacillosamine + acetyl-CoA = UDP-N,N'-diacetylbacillosamine + CoA + H(+). The protein operates within protein modification; protein glycosylation. In terms of biological role, acetyltransferase that modifies the UDP-4-amino-sugar to form UDP-N,N'-diacetylbacillosamine in the N-linked protein glycosylation pathway. The sequence is that of UDP-N-acetylbacillosamine N-acetyltransferase (pglD) from Campylobacter jejuni subsp. jejuni serotype O:2 (strain ATCC 700819 / NCTC 11168).